Here is a 1040-residue protein sequence, read N- to C-terminus: Multidrug resistance protein MdtB (1040 aa).

12 consecutive transmembrane segments (helical) span residues 16 to 36, 347 to 367, 369 to 389, 396 to 416, 440 to 460, 472 to 492, 537 to 557, 863 to 883, 888 to 908, 911 to 931, 968 to 988, and 998 to 1018; these read FIMRPVATTLLMVAILLAGII, LMMAIALVVMIIYLFLRNIPA, IIPGFAVPLSLIGTFAVMVFL, LTLMALTIATGFVVDDAIVVI, IGFTIISLTFSLIAVLIPLLF, FAITLAVAILISAVVSLTLTP, WLTLSVALSTLLLSVLLWVFI, LGSTVWLIVAAVVAMYIVLGI, FIHPITILSTLPTAGVGALLA, IAGSELDVIAIIGIILLIGIV, ILMTTLAALLGALPLMLSTGV, and IGMVGGLIVSQVLTLFTTPVI.

Belongs to the resistance-nodulation-cell division (RND) (TC 2.A.6) family. MdtB subfamily. Part of a tripartite efflux system composed of MdtA, MdtB and MdtC. MdtB forms a heteromultimer with MdtC.

The protein localises to the cell inner membrane. Functionally, the MdtABC tripartite complex confers resistance against novobiocin and deoxycholate. The sequence is that of Multidrug resistance protein MdtB from Escherichia coli O8 (strain IAI1).